A 273-amino-acid chain; its full sequence is Citrate lyase subunit beta-like protein (273 aa).

Substrate-binding residues include arginine 64 and glutamate 112. Positions 112 and 138 each coordinate Mg(2+).

It belongs to the HpcH/HpaI aldolase family. Citrate lyase beta subunit-like subfamily. Homotrimer. It depends on Mg(2+) as a cofactor.

Functionally, may play a role in fatty acid biosynthesis. The sequence is that of Citrate lyase subunit beta-like protein (citE) from Mycobacterium tuberculosis (strain CDC 1551 / Oshkosh).